Consider the following 248-residue polypeptide: Trihelix transcription factor ENAP2 (248 aa).

Positions 1 to 13 (METTTPQSKSSVS) are enriched in polar residues. The disordered stretch occupies residues 1–20 (METTTPQSKSSVSHRPPLGR). Positions 24-113 (WSEEATATLV…RLDVLIGPVV (90 aa)) form a DNA-binding region, MADF. A Nuclear localization signal motif is present at residues 69–76 (RKKTDLQC). A disordered region spans residues 123-150 (SAPFKNHLNPTGSNSTGSSLEDDDEDDD). Residues 130 to 141 (LNPTGSNSTGSS) show a composition bias toward polar residues. Residues 190–210 (YERIEGKKQQMMIELEKQRME) adopt a coiled-coil conformation.

Interacts with the Agrobacterium tumefaciens virulence protein F (VirF) in the nucleus. Binds to EIN2 C-terminal region in the presence of ethylene.

It is found in the nucleus. It localises to the nucleoplasm. Functionally, probable transcription regulator. Promotes histone acetylation during ethylene signaling in an EIN2-dependent manner, thus regulating positively ethylene-responsive genes. In Arabidopsis thaliana (Mouse-ear cress), this protein is Trihelix transcription factor ENAP2.